The sequence spans 92 residues: Beta-2-microglobulin (92 aa).

An Ig-like C1-type domain is found at 2-91 (PQIQVYTRHP…VSLNEPKTVI (90 aa)). C22 and C77 are disulfide-bonded.

This sequence belongs to the beta-2-microglobulin family. In terms of assembly, heterodimer of an alpha chain and a beta chain. Beta-2-microglobulin is the beta-chain of major histocompatibility complex class I molecules.

Its subcellular location is the secreted. Its function is as follows. Component of the class I major histocompatibility complex (MHC). Involved in the presentation of peptide antigens to the immune system. The protein is Beta-2-microglobulin (B2m) of Mus cervicolor (Fawn-colored mouse).